A 930-amino-acid polypeptide reads, in one-letter code: MKLKETLNLGQTAFPMRAGLPNKEPQWQEAWDQADIYKKRQALNEGKPAFHLHDGPPYANGNIHVGHALNKISKDIIVRSKSMSGFRAPYVPGWDTHGLPIEQVLAKKGVKRKEMDLAEYLEMCRDYALSQVDKQRDDFKRLGVSADWENPYITLTPDYEADQVRVFGAMADKGYIYRGAKPVYWSWSSESALAEAEIEYHDIDSTSLYYANKVKDGKGILDTDTYIVVWTTTPFTVTASRGLTVGPDMEYVVVVPVGSERKYLLAEVLVDSLAAKFGWENFEIVTHHTGKELNHIVTEHPWDTEVEELVILGDHVTTDSGTGIVHTAPGFGEDDYNVGIANGLDVVVTVDSRGLMMENAGPDFEGQFYDKVTPLVKEKLGDLLLASEVINHSYPFDWRTKKPIIWRAVPQWFASVSKFRQEILDEIEKTNFQPEWGKKRLYNMIRDRGDWVISRQRAWGVPLPIFYAEDGTAIMTKEVTDHVADLFAEYGSIVWWQRDAKDLLPAGYTHPGSPNGLFEKETDIMDVWFDSGSSWNGVMNARENLSYPADLYLEGSDQYRGWFNSSLITSVAVNGHAPYKAVLSQGFVLDGKGEKMSKSLGNTILPSDVEKQFGAEILRLWVTSVDSSNDVRISMDILKQTSETYRKIRNTLRFLIANTSDFNPKQDAVAYENLGAVDRYMTIKFNQVVDTINKAYAAYDFMAIYKAVVNFVTVDLSAFYLDFAKDVVYIEAANSPERRRMQTVFYDILVKLTKLLTPILPHTAEEIWSYLEHEEEEFVQLAEMPVAQTFSGQEEILEEWSAFMTLRTQAQKALEEARNAKVIGKSLEAHLTIYASQEVKTLLTALNSDIALLMIVSQLTIADEADKPADSVSFEGVAFTVEHAEGEVCERSRRIDPTTKMRSYGVAVCDASAAIIEQYYPEAVAQGFEA.

A 'HIGH' region motif is present at residues 57–67; sequence PYANGNIHVGH. Glu-554 is an L-isoleucyl-5'-AMP binding site. The 'KMSKS' region signature appears at 595–599; it reads KMSKS. Residue Lys-598 participates in ATP binding.

Belongs to the class-I aminoacyl-tRNA synthetase family. IleS type 1 subfamily. Monomer.

It localises to the cytoplasm. The enzyme catalyses tRNA(Ile) + L-isoleucine + ATP = L-isoleucyl-tRNA(Ile) + AMP + diphosphate. In terms of biological role, catalyzes the attachment of isoleucine to tRNA(Ile). As IleRS can inadvertently accommodate and process structurally similar amino acids such as valine, to avoid such errors it has two additional distinct tRNA(Ile)-dependent editing activities. One activity is designated as 'pretransfer' editing and involves the hydrolysis of activated Val-AMP. The other activity is designated 'posttransfer' editing and involves deacylation of mischarged Val-tRNA(Ile). The sequence is that of Isoleucine--tRNA ligase from Streptococcus agalactiae serotype Ia (strain ATCC 27591 / A909 / CDC SS700).